The chain runs to 1021 residues: DNA-directed RNA polymerase 2B, chloroplastic/mitochondrial (1021 aa).

The interval 315–337 (KKQKAEKDKQKEDGEHVTQEQEK) is disordered. Catalysis depends on residues Asp-722, Lys-797, and Asp-954.

This sequence belongs to the phage and mitochondrial RNA polymerase family.

It localises to the plastid. The protein localises to the chloroplast. It is found in the mitochondrion. The enzyme catalyses RNA(n) + a ribonucleoside 5'-triphosphate = RNA(n+1) + diphosphate. Its function is as follows. DNA-dependent RNA polymerase catalyzes the transcription of DNA into RNA using the four ribonucleoside triphosphates as substrates. The sequence is that of DNA-directed RNA polymerase 2B, chloroplastic/mitochondrial (RPOT2-TOM) from Nicotiana tabacum (Common tobacco).